The following is a 204-amino-acid chain: Carbon disulfide hydrolase (204 aa).

Zn(2+) contacts are provided by Cys35, His88, and Cys91.

It belongs to the beta-class carbonic anhydrase family. As to quaternary structure, forms a hexadecameric catenane homooligomer, through interactions of two interlocked octameric rings. Exists as both octamers and hexadecamers in solution. Requires Zn(2+) as cofactor.

The catalysed reaction is carbon disulfide + 2 H2O = 2 hydrogen sulfide + CO2 + 2 H(+). The protein operates within sulfur metabolism; hydrogen sulfide biosynthesis. Its function is as follows. Catalyzes the conversion of carbon disulfide into hydrogen sulfide and carbon dioxide, with carbonyl sulfide as an intermediate. Likely plays a key role in sulfur metabolism that allows Acidianus sp. A1-3 to grow on carbon disulfide as the main carbon and energy source. Does not show carbonic anhydrase activity (hydration of CO(2) to carbonate). In Acidianus sp. (strain A1-3), this protein is Carbon disulfide hydrolase.